The following is a 103-amino-acid chain: Large ribosomal subunit protein uL24 (103 aa).

This sequence belongs to the universal ribosomal protein uL24 family. As to quaternary structure, part of the 50S ribosomal subunit.

Its function is as follows. One of two assembly initiator proteins, it binds directly to the 5'-end of the 23S rRNA, where it nucleates assembly of the 50S subunit. In terms of biological role, one of the proteins that surrounds the polypeptide exit tunnel on the outside of the subunit. The sequence is that of Large ribosomal subunit protein uL24 from Treponema pallidum (strain Nichols).